The chain runs to 188 residues: MPVKKRVPFVAFRTRVRDETIGGPNPYRWEVRTTEDYFSGKRVVLFSLPGAFTPTCSTQQLPDFERLYDEFGKVGIEAVYCLSVNDAFVMNAWGKALGLEKVRLIPDGSGEFTRKMGMLVAKDNLGFGMRSWRYAAVVNDSVVEQWFEEEGFSDNCESDPYWASSPQNILETLRTFDTARLGRVPIKF.

Residues 2-152 (PVKKRVPFVA…VEQWFEEEGF (151 aa)) enclose the Thioredoxin domain. The Cysteine sulfenic acid (-SOH) intermediate (for peroxiredoxin activity) role is filled by C56.

The protein belongs to the peroxiredoxin family. Prx5 subfamily. As to quaternary structure, monomer.

It carries out the reaction a hydroperoxide + 2 glutathione = an alcohol + glutathione disulfide + H2O. Its function is as follows. Thiol-specific peroxidase that catalyzes the reduction of hydrogen peroxide and organic hydroperoxides to water and alcohols, respectively. Plays a role in cell protection against oxidative stress by detoxifying peroxides. The polypeptide is Peroxiredoxin y4vD (Sinorhizobium fredii (strain NBRC 101917 / NGR234)).